The sequence spans 485 residues: Cytochrome P450 monooxygenase tndB (485 aa).

Residues 20-40 (VYGISAVIAVGLAIYSASLAI) form a helical membrane-spanning segment. Position 481 (Cys-481) interacts with heme.

The protein belongs to the cytochrome P450 family. Heme is required as a cofactor.

Its subcellular location is the membrane. It participates in secondary metabolite biosynthesis; terpenoid biosynthesis. Functionally, cytochrome P450 monooxygenase; part of the gene cluster that mediates the biosynthesis of talaronoid C, a fusicoccane diterpenoid with an unprecedented tricyclic 5/8/6 ring system. The first step in the pathway is performed by the fusicoccadiene synthase tndC that possesses both prenyl transferase and terpene cyclase activity, converting isopentenyl diphosphate and dimethylallyl diphosphate into geranylgeranyl diphosphate (GGDP) and further converting GGDP into talarodiene, a precursor for talaronoid C. The remaining enzymes from the cluster include the cytochrome P450 monooxygenase tndB, the aldehyde reductase tndE and the alcohol dehydrogenase tndF that are involved in the conversion of talarodiene into talaronoid C. The sequence is that of Cytochrome P450 monooxygenase tndB from Aspergillus flavipes.